The sequence spans 310 residues: Nuclear hormone receptor family member nhr-89 (310 aa).

A DNA-binding region (nuclear receptor) is located at residues 5-79; it reads EGPCRVCHSV…SGMRRDCVRK (75 aa). NR C4-type zinc fingers lie at residues 8–29 and 43–67; these read CRVC…CMSC and CPAN…YNKC. An NR LBD domain is found at 101-310; sequence KLSESYEELL…TLHQKYQIPF (210 aa).

Belongs to the nuclear hormone receptor family.

It localises to the nucleus. Functionally, orphan nuclear receptor. This is Nuclear hormone receptor family member nhr-89 (nhr-89) from Caenorhabditis elegans.